Consider the following 612-residue polypeptide: tRNA uridine 5-carboxymethylaminomethyl modification enzyme MnmG (612 aa).

Residue 9-14 (GAGHAG) participates in FAD binding. Residue 270-284 (GPLYCPSIEDKVFKF) participates in NAD(+) binding.

This sequence belongs to the MnmG family. As to quaternary structure, homodimer. Heterotetramer of two MnmE and two MnmG subunits. The cofactor is FAD.

It localises to the cytoplasm. Functionally, NAD-binding protein involved in the addition of a carboxymethylaminomethyl (cmnm) group at the wobble position (U34) of certain tRNAs, forming tRNA-cmnm(5)s(2)U34. This is tRNA uridine 5-carboxymethylaminomethyl modification enzyme MnmG from Mycoplasma genitalium (strain ATCC 33530 / DSM 19775 / NCTC 10195 / G37) (Mycoplasmoides genitalium).